Here is a 177-residue protein sequence, read N- to C-terminus: ATP synthase subunit delta (177 aa).

This sequence belongs to the ATPase delta chain family. F-type ATPases have 2 components, F(1) - the catalytic core - and F(0) - the membrane proton channel. F(1) has five subunits: alpha(3), beta(3), gamma(1), delta(1), epsilon(1). F(0) has three main subunits: a(1), b(2) and c(10-14). The alpha and beta chains form an alternating ring which encloses part of the gamma chain. F(1) is attached to F(0) by a central stalk formed by the gamma and epsilon chains, while a peripheral stalk is formed by the delta and b chains.

Its subcellular location is the cell inner membrane. Functionally, f(1)F(0) ATP synthase produces ATP from ADP in the presence of a proton or sodium gradient. F-type ATPases consist of two structural domains, F(1) containing the extramembraneous catalytic core and F(0) containing the membrane proton channel, linked together by a central stalk and a peripheral stalk. During catalysis, ATP synthesis in the catalytic domain of F(1) is coupled via a rotary mechanism of the central stalk subunits to proton translocation. In terms of biological role, this protein is part of the stalk that links CF(0) to CF(1). It either transmits conformational changes from CF(0) to CF(1) or is implicated in proton conduction. This chain is ATP synthase subunit delta, found in Aliivibrio fischeri (strain ATCC 700601 / ES114) (Vibrio fischeri).